We begin with the raw amino-acid sequence, 411 residues long: Adenylosuccinate synthetase (411 aa).

Residues 11–17 (GDEGKGK) and 39–41 (GHT) contribute to the GTP site. Catalysis depends on Asp-12, which acts as the Proton acceptor. Residues Asp-12 and Gly-39 each contribute to the Mg(2+) site. Residues 12–15 (DEGK), 37–40 (NAGH), Thr-121, Arg-135, Gln-215, Thr-230, and Arg-294 each bind IMP. Catalysis depends on His-40, which acts as the Proton donor. 290-296 (TTTKRPR) is a binding site for substrate. Residues Arg-296, 322-324 (KLD), and 400-402 (STS) contribute to the GTP site.

The protein belongs to the adenylosuccinate synthetase family. In terms of assembly, homodimer. Mg(2+) serves as cofactor.

The protein localises to the cytoplasm. The catalysed reaction is IMP + L-aspartate + GTP = N(6)-(1,2-dicarboxyethyl)-AMP + GDP + phosphate + 2 H(+). It participates in purine metabolism; AMP biosynthesis via de novo pathway; AMP from IMP: step 1/2. Plays an important role in the de novo pathway of purine nucleotide biosynthesis. Catalyzes the first committed step in the biosynthesis of AMP from IMP. In Helicobacter pylori (strain Shi470), this protein is Adenylosuccinate synthetase.